A 270-amino-acid polypeptide reads, in one-letter code: Putative phosphoenolpyruvate synthase regulatory protein (270 aa).

Residue 150–157 (GVSRSGKT) coordinates ADP.

Belongs to the pyruvate, phosphate/water dikinase regulatory protein family. PSRP subfamily.

The enzyme catalyses [pyruvate, water dikinase] + ADP = [pyruvate, water dikinase]-phosphate + AMP + H(+). It carries out the reaction [pyruvate, water dikinase]-phosphate + phosphate + H(+) = [pyruvate, water dikinase] + diphosphate. Bifunctional serine/threonine kinase and phosphorylase involved in the regulation of the phosphoenolpyruvate synthase (PEPS) by catalyzing its phosphorylation/dephosphorylation. In Cupriavidus metallidurans (strain ATCC 43123 / DSM 2839 / NBRC 102507 / CH34) (Ralstonia metallidurans), this protein is Putative phosphoenolpyruvate synthase regulatory protein.